The chain runs to 327 residues: Probable cell division protein WhiA (327 aa).

The H-T-H motif DNA-binding region spans 275–308 (SLEELGRLADPVMTKDAVAGRIRRLLSMADRKAK). A disordered region spans residues 307-327 (AKTEGIPDTESAVTPELLEEA).

Belongs to the WhiA family.

Its function is as follows. Involved in cell division and chromosome segregation. In Mycobacteroides abscessus (strain ATCC 19977 / DSM 44196 / CCUG 20993 / CIP 104536 / JCM 13569 / NCTC 13031 / TMC 1543 / L948) (Mycobacterium abscessus), this protein is Probable cell division protein WhiA.